The chain runs to 224 residues: Small ribosomal subunit protein uS3 (224 aa).

The region spanning 39–107 (IREFLKKKPS…DVWVEIAEVK (69 aa)) is the KH type-2 domain.

It belongs to the universal ribosomal protein uS3 family. As to quaternary structure, part of the 30S ribosomal subunit. Forms a tight complex with proteins S10 and S14.

Functionally, binds the lower part of the 30S subunit head. Binds mRNA in the 70S ribosome, positioning it for translation. The chain is Small ribosomal subunit protein uS3 from Chlamydia trachomatis serovar A (strain ATCC VR-571B / DSM 19440 / HAR-13).